The sequence spans 101 residues: Small ribosomal subunit protein uS14 (101 aa).

It belongs to the universal ribosomal protein uS14 family. Part of the 30S ribosomal subunit. Contacts proteins S3 and S10.

Binds 16S rRNA, required for the assembly of 30S particles and may also be responsible for determining the conformation of the 16S rRNA at the A site. In Vibrio campbellii (strain ATCC BAA-1116), this protein is Small ribosomal subunit protein uS14.